The sequence spans 121 residues: Large ribosomal subunit protein uL18 (121 aa).

This sequence belongs to the universal ribosomal protein uL18 family. In terms of assembly, part of the 50S ribosomal subunit; part of the 5S rRNA/L5/L18/L25 subcomplex. Contacts the 5S and 23S rRNAs.

This is one of the proteins that bind and probably mediate the attachment of the 5S RNA into the large ribosomal subunit, where it forms part of the central protuberance. This is Large ribosomal subunit protein uL18 from Streptococcus thermophilus (strain CNRZ 1066).